An 84-amino-acid polypeptide reads, in one-letter code: Small ribosomal subunit protein uS17c (84 aa).

It belongs to the universal ribosomal protein uS17 family. Part of the 30S ribosomal subunit.

The protein resides in the plastid. It localises to the chloroplast. Its function is as follows. One of the primary rRNA binding proteins, it binds specifically to the 5'-end of 16S ribosomal RNA. The chain is Small ribosomal subunit protein uS17c (rps17) from Trieres chinensis (Marine centric diatom).